The sequence spans 250 residues: DNA repair protein RecO (250 aa).

Belongs to the RecO family.

In terms of biological role, involved in DNA repair and RecF pathway recombination. The sequence is that of DNA repair protein RecO from Staphylococcus aureus (strain Mu3 / ATCC 700698).